We begin with the raw amino-acid sequence, 577 residues long: 2-succinyl-5-enolpyruvyl-6-hydroxy-3-cyclohexene-1-carboxylate synthase (577 aa).

It belongs to the TPP enzyme family. MenD subfamily. As to quaternary structure, homodimer. It depends on Mg(2+) as a cofactor. The cofactor is Mn(2+). Thiamine diphosphate serves as cofactor.

It carries out the reaction isochorismate + 2-oxoglutarate + H(+) = 5-enolpyruvoyl-6-hydroxy-2-succinyl-cyclohex-3-ene-1-carboxylate + CO2. It functions in the pathway quinol/quinone metabolism; 1,4-dihydroxy-2-naphthoate biosynthesis; 1,4-dihydroxy-2-naphthoate from chorismate: step 2/7. Its pathway is quinol/quinone metabolism; menaquinone biosynthesis. In terms of biological role, catalyzes the thiamine diphosphate-dependent decarboxylation of 2-oxoglutarate and the subsequent addition of the resulting succinic semialdehyde-thiamine pyrophosphate anion to isochorismate to yield 2-succinyl-5-enolpyruvyl-6-hydroxy-3-cyclohexene-1-carboxylate (SEPHCHC). The chain is 2-succinyl-5-enolpyruvyl-6-hydroxy-3-cyclohexene-1-carboxylate synthase from Christiangramia forsetii (strain DSM 17595 / CGMCC 1.15422 / KT0803) (Gramella forsetii).